The sequence spans 455 residues: Tubulin alpha-1 chain (455 aa).

Residues Gln11, Glu75, Ser144, Gly148, Thr149, Thr183, Asn210, and Asn232 each coordinate GTP. Glu75 is a binding site for Mg(2+). Glu258 is a catalytic residue.

This sequence belongs to the tubulin family. As to quaternary structure, dimer of alpha and beta chains. A typical microtubule is a hollow water-filled tube with an outer diameter of 25 nm and an inner diameter of 15 nM. Alpha-beta heterodimers associate head-to-tail to form protofilaments running lengthwise along the microtubule wall with the beta-tubulin subunit facing the microtubule plus end conferring a structural polarity. Microtubules usually have 13 protofilaments but different protofilament numbers can be found in some organisms and specialized cells. Mg(2+) serves as cofactor.

The protein localises to the cytoplasm. It localises to the cytoskeleton. It catalyses the reaction GTP + H2O = GDP + phosphate + H(+). Functionally, tubulin is the major constituent of microtubules, a cylinder consisting of laterally associated linear protofilaments composed of alpha- and beta-tubulin heterodimers. Microtubules grow by the addition of GTP-tubulin dimers to the microtubule end, where a stabilizing cap forms. Below the cap, tubulin dimers are in GDP-bound state, owing to GTPase activity of alpha-tubulin. The polypeptide is Tubulin alpha-1 chain (nda2) (Schizosaccharomyces pombe (strain 972 / ATCC 24843) (Fission yeast)).